The sequence spans 233 residues: Large ribosomal subunit protein uL1 (233 aa).

This sequence belongs to the universal ribosomal protein uL1 family. As to quaternary structure, part of the 50S ribosomal subunit.

Functionally, binds directly to 23S rRNA. The L1 stalk is quite mobile in the ribosome, and is involved in E site tRNA release. In terms of biological role, protein L1 is also a translational repressor protein, it controls the translation of the L11 operon by binding to its mRNA. The sequence is that of Large ribosomal subunit protein uL1 from Pseudoalteromonas atlantica (strain T6c / ATCC BAA-1087).